Consider the following 122-residue polypeptide: MIQTESRLEVADNTGAREVMCIKVLGGSKRRYASVGDIIKVSVKDAAPRGRVKKGDIYNAVVVRTAKGVRRPDGSLIKFDGNAAVLLNTKLEPIGTRIFGPVTRELRTERFMKIVSLAPEVL.

This sequence belongs to the universal ribosomal protein uL14 family. In terms of assembly, part of the 50S ribosomal subunit. Forms a cluster with proteins L3 and L19. In the 70S ribosome, L14 and L19 interact and together make contacts with the 16S rRNA in bridges B5 and B8.

Binds to 23S rRNA. Forms part of two intersubunit bridges in the 70S ribosome. The polypeptide is Large ribosomal subunit protein uL14 (Ralstonia nicotianae (strain ATCC BAA-1114 / GMI1000) (Ralstonia solanacearum)).